The sequence spans 218 residues: Ribulose-phosphate 3-epimerase (218 aa).

Ser10 lines the substrate pocket. Positions 35, 37, and 68 each coordinate a divalent metal cation. Residue Asp37 is the Proton acceptor of the active site. Residues His68, 144–147, 177–179, and 199–200 contribute to the substrate site; these read GFSG, DGG, and GS. Asp177 provides a ligand contact to a divalent metal cation. Residue Asp177 is the Proton donor of the active site.

It belongs to the ribulose-phosphate 3-epimerase family. A divalent metal cation serves as cofactor.

The catalysed reaction is D-ribulose 5-phosphate = D-xylulose 5-phosphate. The protein operates within carbohydrate degradation. In terms of biological role, catalyzes the reversible epimerization of D-ribulose 5-phosphate to D-xylulose 5-phosphate. In Treponema pallidum (strain Nichols), this protein is Ribulose-phosphate 3-epimerase.